Consider the following 201-residue polypeptide: Holliday junction branch migration complex subunit RuvA (201 aa).

Residues 1-63 (MIAFVSGTVA…EDSLTLYGFA (63 aa)) form a domain I region. Positions 64 to 139 (DDDERQVFEL…RLGEPIGAPA (76 aa)) are domain II. The segment at 139-143 (AVGAP) is flexible linker. A domain III region spans residues 144 to 201 (VSTGWRDQLHAALIGLGYATREADEAVSAVAPQAEAAGGTPQVGALLKAALQTLNRAR).

The protein belongs to the RuvA family. Homotetramer. Forms an RuvA(8)-RuvB(12)-Holliday junction (HJ) complex. HJ DNA is sandwiched between 2 RuvA tetramers; dsDNA enters through RuvA and exits via RuvB. An RuvB hexamer assembles on each DNA strand where it exits the tetramer. Each RuvB hexamer is contacted by two RuvA subunits (via domain III) on 2 adjacent RuvB subunits; this complex drives branch migration. In the full resolvosome a probable DNA-RuvA(4)-RuvB(12)-RuvC(2) complex forms which resolves the HJ.

It is found in the cytoplasm. In terms of biological role, the RuvA-RuvB-RuvC complex processes Holliday junction (HJ) DNA during genetic recombination and DNA repair, while the RuvA-RuvB complex plays an important role in the rescue of blocked DNA replication forks via replication fork reversal (RFR). RuvA specifically binds to HJ cruciform DNA, conferring on it an open structure. The RuvB hexamer acts as an ATP-dependent pump, pulling dsDNA into and through the RuvAB complex. HJ branch migration allows RuvC to scan DNA until it finds its consensus sequence, where it cleaves and resolves the cruciform DNA. The protein is Holliday junction branch migration complex subunit RuvA of Streptomyces coelicolor (strain ATCC BAA-471 / A3(2) / M145).